A 361-amino-acid chain; its full sequence is Dihydroorotate dehydrogenase (quinone) (361 aa).

Residues 67–71 (AGLDK) and T91 each bind FMN. Residue K71 coordinates substrate. Residue 116–120 (NRMGF) participates in substrate binding. 2 residues coordinate FMN: N145 and N178. Position 178 (N178) interacts with substrate. S181 functions as the Nucleophile in the catalytic mechanism. N183 serves as a coordination point for substrate. FMN is bound by residues K223 and G251. Substrate is bound at residue 252-253 (NT). FMN contacts are provided by residues G273, G302, and 323–324 (YT).

The protein belongs to the dihydroorotate dehydrogenase family. Type 2 subfamily. Monomer. The cofactor is FMN.

It is found in the cell membrane. The catalysed reaction is (S)-dihydroorotate + a quinone = orotate + a quinol. It functions in the pathway pyrimidine metabolism; UMP biosynthesis via de novo pathway; orotate from (S)-dihydroorotate (quinone route): step 1/1. In terms of biological role, catalyzes the conversion of dihydroorotate to orotate with quinone as electron acceptor. This is Dihydroorotate dehydrogenase (quinone) from Deinococcus geothermalis (strain DSM 11300 / CIP 105573 / AG-3a).